The following is a 146-amino-acid chain: Large ribosomal subunit protein bL9 (146 aa).

It belongs to the bacterial ribosomal protein bL9 family.

In terms of biological role, binds to the 23S rRNA. This is Large ribosomal subunit protein bL9 from Flavobacterium johnsoniae (strain ATCC 17061 / DSM 2064 / JCM 8514 / BCRC 14874 / CCUG 350202 / NBRC 14942 / NCIMB 11054 / UW101) (Cytophaga johnsonae).